The following is a 612-amino-acid chain: UPF0329 protein ECU05_1680/ECU11_0050 (612 aa).

Positions 304–330 (RQRREMEKKEEEKKKEEEKKKEEEKRK) are enriched in basic and acidic residues. Residues 304–424 (RQRREMEKKE…RKRYKIHRRV (121 aa)) form a disordered region. Residues 331-349 (EEKKKKKEEKKEEKKKKKE) show a composition bias toward basic residues. A compositionally biased stretch (basic and acidic residues) spans 350 to 388 (EKKEEKKEEKKEEKKEEKKEEKKEEKKEEKSGKSLREGE).

Belongs to the UPF0329 family.

This chain is UPF0329 protein ECU05_1680/ECU11_0050, found in Encephalitozoon cuniculi (strain GB-M1) (Microsporidian parasite).